Reading from the N-terminus, the 139-residue chain is Transmembrane protein 250 (139 aa).

The next 2 helical transmembrane spans lie at 56–76 (FLLY…LAAL) and 116–136 (VYGI…FMVF).

In terms of assembly, (Microbial infection) Interacts with herpes simplex virus 1/HHV-1 protein CVC2/UL25.

The protein localises to the membrane. It is found in the nucleus. The protein resides in the cytoplasm. Functionally, may play a role in cell proliferation by promoting progression into S phase. In terms of biological role, (Microbial infection) Promotes human herpes simplex virus 1/HHV-1 proliferation. In Homo sapiens (Human), this protein is Transmembrane protein 250.